The chain runs to 405 residues: Cysteine desulfurase IscS (405 aa).

Residues 75 to 76 (AT), Asn-156, Gln-184, and 204 to 206 (SAH) each bind pyridoxal 5'-phosphate. At Lys-207 the chain carries N6-(pyridoxal phosphate)lysine. Position 244 (Thr-244) interacts with pyridoxal 5'-phosphate. Residue Cys-329 is the Cysteine persulfide intermediate of the active site. Cys-329 is a binding site for [2Fe-2S] cluster.

Belongs to the class-V pyridoxal-phosphate-dependent aminotransferase family. NifS/IscS subfamily. Homodimer. Forms a heterotetramer with IscU, interacts with other sulfur acceptors. Pyridoxal 5'-phosphate serves as cofactor.

The protein localises to the cytoplasm. It catalyses the reaction (sulfur carrier)-H + L-cysteine = (sulfur carrier)-SH + L-alanine. Its pathway is cofactor biosynthesis; iron-sulfur cluster biosynthesis. Functionally, master enzyme that delivers sulfur to a number of partners involved in Fe-S cluster assembly, tRNA modification or cofactor biosynthesis. Catalyzes the removal of elemental sulfur atoms from cysteine to produce alanine. Functions as a sulfur delivery protein for Fe-S cluster synthesis onto IscU, an Fe-S scaffold assembly protein, as well as other S acceptor proteins. This Acinetobacter baumannii (strain AB307-0294) protein is Cysteine desulfurase IscS.